A 508-amino-acid chain; its full sequence is uncharacterized protein (508 aa).

A Resolvase/invertase-type recombinase catalytic domain is found at 3-163 (KAIAYMRFSS…LSWKKKRQDA (161 aa)). Ser11 acts as the O-(5'-phospho-DNA)-serine intermediate in catalysis. The segment at residues 175–290 (PRWLSLDDKR…QEIRLAPFGI (116 aa)) is a DNA-binding region (recombinase).

This is an uncharacterized protein from Escherichia coli (strain K12).